We begin with the raw amino-acid sequence, 330 residues long: Malate dehydrogenase (330 aa).

Residue 12-18 participates in NAD(+) binding; it reads GAAGQIG. 2 residues coordinate substrate: Arg-93 and Arg-99. Residues Asn-106, Gln-113, and 130-132 each bind NAD(+); that span reads VGN. Residues Asn-132 and Arg-166 each contribute to the substrate site. The active-site Proton acceptor is the His-191.

The protein belongs to the LDH/MDH superfamily. MDH type 2 family.

It carries out the reaction (S)-malate + NAD(+) = oxaloacetate + NADH + H(+). Its function is as follows. Catalyzes the reversible oxidation of malate to oxaloacetate. This chain is Malate dehydrogenase, found in Azoarcus sp. (strain BH72).